A 245-amino-acid polypeptide reads, in one-letter code: Uridylate kinase (245 aa).

12 to 15 contributes to the ATP binding site; it reads KISG. UMP is bound at residue G55. ATP contacts are provided by G56 and R60. Residues D76 and 137–144 contribute to the UMP site; that span reads AGAPYLTT. ATP is bound by residues T164, Y171, and D174.

It belongs to the UMP kinase family. In terms of assembly, homohexamer.

It is found in the cytoplasm. It carries out the reaction UMP + ATP = UDP + ADP. Its pathway is pyrimidine metabolism; CTP biosynthesis via de novo pathway; UDP from UMP (UMPK route): step 1/1. Its activity is regulated as follows. Inhibited by UTP. Functionally, catalyzes the reversible phosphorylation of UMP to UDP. The polypeptide is Uridylate kinase (Chlamydia trachomatis serovar D (strain ATCC VR-885 / DSM 19411 / UW-3/Cx)).